We begin with the raw amino-acid sequence, 378 residues long: Putative F-box/kelch-repeat protein At3g43710 (378 aa).

Positions 23–69 constitute an F-box domain; the sequence is TFGIEMLPDDLVLSCLARVPRMYYPILSLVSKRFRSFLTSTELYQTR. Kelch repeat units follow at residues 130–176, 178–227, and 262–308; these read NIYV…VLDG, IYVA…GYDG, and SQCV…VPTK.

The sequence is that of Putative F-box/kelch-repeat protein At3g43710 from Arabidopsis thaliana (Mouse-ear cress).